We begin with the raw amino-acid sequence, 655 residues long: Threonine--tRNA ligase (655 aa).

The TGS domain maps to 1-66 (MIDLVFPDGS…TGERKFEILT (66 aa)). The segment at 248 to 540 (DHRKLGKTMD…LLENFAGALP (293 aa)) is catalytic. Zn(2+) is bound by residues Cys-340, His-391, and His-517.

It belongs to the class-II aminoacyl-tRNA synthetase family. As to quaternary structure, homodimer. It depends on Zn(2+) as a cofactor.

Its subcellular location is the cytoplasm. It carries out the reaction tRNA(Thr) + L-threonine + ATP = L-threonyl-tRNA(Thr) + AMP + diphosphate + H(+). Functionally, catalyzes the attachment of threonine to tRNA(Thr) in a two-step reaction: L-threonine is first activated by ATP to form Thr-AMP and then transferred to the acceptor end of tRNA(Thr). Also edits incorrectly charged L-seryl-tRNA(Thr). The polypeptide is Threonine--tRNA ligase (Caulobacter vibrioides (strain ATCC 19089 / CIP 103742 / CB 15) (Caulobacter crescentus)).